The chain runs to 293 residues: Mimecan (293 aa).

The signal sequence occupies residues 1 to 19 (MKTLQATFFLVAFVPLVKP). N-linked (GlcNAc...) asparagine glycosylation occurs at N60. LRR repeat units follow at residues 107–126 (EAVPPLPKETAYLYARFNKI), 127–150 (KRIAVSDFADITTLRRIDFSGNMI), 151–174 (EEIEDGAFSKLLLLEELSLAENRL), 175–194 (VKLPVLPPKLTTFNANQNRI), 195–220 (KSRGIKNNAFKKLTNLAYLYLGHNAL), 221–241 (ESVPLNLPESLRILHLQHNNI), and 242–272 (TTITDDTFCKSNNTRYIRTRMDEIRMEGNPI). N-linked (GlcNAc...) asparagine glycosylation is found at N240 and N253. C250 and C283 are joined by a disulfide.

The protein belongs to the small leucine-rich proteoglycan (SLRP) family. SLRP class III subfamily. Post-translationally, contains keratan sulfate. In terms of tissue distribution, expressed in many tissues.

The protein localises to the secreted. It localises to the extracellular space. The protein resides in the extracellular matrix. Functionally, induces bone formation in conjunction with TGF-beta-1 or TGF-beta-2. The chain is Mimecan (OGN) from Coturnix japonica (Japanese quail).